The following is a 161-amino-acid chain: Inner membrane assembly complex subunit 17 (161 aa).

The N-terminal 22 residues, 1–22 (MLNPRPCVPRLLSAVARCHKPY), are a transit peptide targeting the mitochondrion. Residues 23 to 84 (STSIKSLEDL…QQQQQALKKF (62 aa)) are Mitochondrial matrix-facing. A helical membrane pass occupies residues 85–107 (VRPMWIFLLMSSFFYLTGHYIWW). At 108-161 (KLEYDEREIELHKQVQALRQELDSAIAAKHSGKEPALSGAGAKKPKRWYLAWLW) the chain is on the mitochondrial intermembrane side. A coiled-coil region spans residues 109–138 (LEYDEREIELHKQVQALRQELDSAIAAKHS).

Belongs to the INA17 family. As to quaternary structure, component of the inner membrane assembly (INA) complex, composed of INA17 and INA22. Interacts with a subset of F(1)F(0)-ATP synthase subunits of the F(1)-domain and the peripheral stalk.

The protein localises to the mitochondrion inner membrane. Its function is as follows. Component of the INA complex (INAC) that promotes the biogenesis of mitochondrial F(1)F(0)-ATP synthase. INAC facilitates the assembly of the peripheral stalk and promotes the assembly of the catalytic F(1)-domain with the membrane-embedded F(0)-domain. This Lachancea thermotolerans (strain ATCC 56472 / CBS 6340 / NRRL Y-8284) (Yeast) protein is Inner membrane assembly complex subunit 17.